Consider the following 228-residue polypeptide: Ribose-5-phosphate isomerase A (228 aa).

Substrate contacts are provided by residues 32 to 35 (TGST), 85 to 88 (DGAD), and 98 to 101 (KGGG). Residue glutamate 107 is the Proton acceptor of the active site. Lysine 125 provides a ligand contact to substrate.

The protein belongs to the ribose 5-phosphate isomerase family. In terms of assembly, homodimer.

It carries out the reaction aldehydo-D-ribose 5-phosphate = D-ribulose 5-phosphate. Its pathway is carbohydrate degradation; pentose phosphate pathway; D-ribose 5-phosphate from D-ribulose 5-phosphate (non-oxidative stage): step 1/1. Its function is as follows. Catalyzes the reversible conversion of ribose-5-phosphate to ribulose 5-phosphate. The sequence is that of Ribose-5-phosphate isomerase A from Cupriavidus pinatubonensis (strain JMP 134 / LMG 1197) (Cupriavidus necator (strain JMP 134)).